The following is a 120-amino-acid chain: NAD(P)H-quinone oxidoreductase subunit 3, chloroplastic (120 aa).

3 helical membrane-spanning segments follow: residues 9–29 (IFWAFLIISSVIPILAFLISG), 64–84 (MFALVFVVFDVETVFLYPWAM), and 88–108 (VLGVSVFIEALIFVLIPIVGS).

This sequence belongs to the complex I subunit 3 family. NDH is composed of at least 16 different subunits, 5 of which are encoded in the nucleus.

The protein localises to the plastid. It is found in the chloroplast thylakoid membrane. The enzyme catalyses a plastoquinone + NADH + (n+1) H(+)(in) = a plastoquinol + NAD(+) + n H(+)(out). The catalysed reaction is a plastoquinone + NADPH + (n+1) H(+)(in) = a plastoquinol + NADP(+) + n H(+)(out). Its function is as follows. NDH shuttles electrons from NAD(P)H:plastoquinone, via FMN and iron-sulfur (Fe-S) centers, to quinones in the photosynthetic chain and possibly in a chloroplast respiratory chain. The immediate electron acceptor for the enzyme in this species is believed to be plastoquinone. Couples the redox reaction to proton translocation, and thus conserves the redox energy in a proton gradient. This is NAD(P)H-quinone oxidoreductase subunit 3, chloroplastic from Calycanthus floridus var. glaucus (Eastern sweetshrub).